A 548-amino-acid polypeptide reads, in one-letter code: Chaperonin GroEL (548 aa).

ATP contacts are provided by residues 30 to 33, lysine 51, 87 to 91, glycine 415, 479 to 481, and aspartate 495; these read TLGP, DGTTT, and NAA. A disordered region spans residues 524–548; sequence LPKEDKSSDSSSSPAGGMGGMGGMM. Residues 539–548 show a composition bias toward gly residues; it reads GGMGGMGGMM.

It belongs to the chaperonin (HSP60) family. In terms of assembly, forms a cylinder of 14 subunits composed of two heptameric rings stacked back-to-back. Interacts with the co-chaperonin GroES.

It is found in the cytoplasm. The catalysed reaction is ATP + H2O + a folded polypeptide = ADP + phosphate + an unfolded polypeptide.. Its function is as follows. Together with its co-chaperonin GroES, plays an essential role in assisting protein folding. The GroEL-GroES system forms a nano-cage that allows encapsulation of the non-native substrate proteins and provides a physical environment optimized to promote and accelerate protein folding. This is Chaperonin GroEL from Buchnera aphidicola subsp. Acyrthosiphon pisum (strain Tuc7).